We begin with the raw amino-acid sequence, 387 residues long: 4-hydroxy-3-methylbut-2-en-1-yl diphosphate synthase (flavodoxin) (387 aa).

Residues Cys-272, Cys-275, Cys-307, and Glu-314 each coordinate [4Fe-4S] cluster.

This sequence belongs to the IspG family. [4Fe-4S] cluster is required as a cofactor.

The enzyme catalyses (2E)-4-hydroxy-3-methylbut-2-enyl diphosphate + oxidized [flavodoxin] + H2O + 2 H(+) = 2-C-methyl-D-erythritol 2,4-cyclic diphosphate + reduced [flavodoxin]. It participates in isoprenoid biosynthesis; isopentenyl diphosphate biosynthesis via DXP pathway; isopentenyl diphosphate from 1-deoxy-D-xylulose 5-phosphate: step 5/6. Functionally, converts 2C-methyl-D-erythritol 2,4-cyclodiphosphate (ME-2,4cPP) into 1-hydroxy-2-methyl-2-(E)-butenyl 4-diphosphate. The polypeptide is 4-hydroxy-3-methylbut-2-en-1-yl diphosphate synthase (flavodoxin) (Granulibacter bethesdensis (strain ATCC BAA-1260 / CGDNIH1)).